Here is a 128-residue protein sequence, read N- to C-terminus: AGGAHFFGQEGSRKVPEKGKEPATRSVLMAPTLHKAHQAAGRQTDDSAVVHFFKNMMSPKAPVQQKARSGASRAITKFIWGTDGQRPHYGASGSSKSREAYRGRKDGSGTLSSFFKMGKKGEGSPARR.

Disordered stretches follow at residues 1–24 (AGGA…EPAT) and 82–128 (TDGQ…PARR). Composition is skewed to basic and acidic residues over residues 11-23 (GSRK…KEPA) and 96-107 (KSREAYRGRKDG).

The protein belongs to the myelin basic protein family. The N-terminus is blocked.

The protein resides in the myelin membrane. Its function is as follows. This protein may function to maintain proper structure of myelin. In Carcharhinus obscurus (Dusky shark), this protein is Myelin basic protein (MBP).